The following is a 200-amino-acid chain: Ribonuclease HII (200 aa).

The 187-residue stretch at Glu-14 to Asp-200 folds into the RNase H type-2 domain. A divalent metal cation contacts are provided by Asp-20, Glu-21, and Asp-112.

This sequence belongs to the RNase HII family. The cofactor is Mn(2+). It depends on Mg(2+) as a cofactor.

The protein resides in the cytoplasm. The enzyme catalyses Endonucleolytic cleavage to 5'-phosphomonoester.. Functionally, endonuclease that specifically degrades the RNA of RNA-DNA hybrids. The polypeptide is Ribonuclease HII (Salinibacter ruber (strain DSM 13855 / M31)).